The primary structure comprises 174 residues: MNYFALFDLPRKFNIDKKLLSQNFYKLQLKFHPDLFINDSESKKKIILEKSIQINKGYKTLKNFLNRAIYFLCLNGYEVKKETLLLKNNDFLIRYFSLYEQLDNLKENNFNKKELNNLEQIIQKKIIYCKKKIELEFEKTRYKKVIKIISELLFFEKIKDVLKKEYNIYLRQIN.

The J domain occupies 2–74 (NYFALFDLPR…LNRAIYFLCL (73 aa)).

This sequence belongs to the HscB family. As to quaternary structure, interacts with HscA and stimulates its ATPase activity. Interacts with IscU.

Co-chaperone involved in the maturation of iron-sulfur cluster-containing proteins. Seems to help targeting proteins to be folded toward HscA. This is Co-chaperone protein HscB from Buchnera aphidicola subsp. Acyrthosiphon pisum (strain 5A).